A 231-amino-acid polypeptide reads, in one-letter code: Large ribosomal subunit protein uL1 (231 aa).

Belongs to the universal ribosomal protein uL1 family. As to quaternary structure, part of the 50S ribosomal subunit.

Binds directly to 23S rRNA. The L1 stalk is quite mobile in the ribosome, and is involved in E site tRNA release. Functionally, protein L1 is also a translational repressor protein, it controls the translation of the L11 operon by binding to its mRNA. This Mycoplasmopsis synoviae (strain 53) (Mycoplasma synoviae) protein is Large ribosomal subunit protein uL1.